The following is a 392-amino-acid chain: Ameloblastin (392 aa).

A signal peptide spans 1-26; that stretch reads MPALKIPLFKMKDMILILCLLKMSSA. Pro37 carries the post-translational modification Hydroxyproline. At Ser43 the chain carries Phosphoserine. Disordered regions lie at residues 86–109, 247–280, and 349–392; these read FPWM…PGQK, TLEF…LADP, and TTLG…FQEP. The segment covering 97 to 109 has biased composition (low complexity); sequence QQPSLQPQQPGQK. A compositionally biased stretch (polar residues) spans 359 to 381; that stretch reads VDSTATPDTQHTLMPRNKAQQPQ. Over residues 382–392 the composition is skewed to basic and acidic residues; the sequence is IKHDAWHFQEP.

The protein belongs to the ameloblastin family.

The protein resides in the secreted. Its subcellular location is the extracellular space. The protein localises to the extracellular matrix. Functionally, involved in the mineralization and structural organization of enamel. This Bos taurus (Bovine) protein is Ameloblastin (AMBN).